Reading from the N-terminus, the 485-residue chain is Glutamyl-tRNA(Gln) amidotransferase subunit A (485 aa).

Residues lysine 79 and serine 154 each act as charge relay system in the active site. Catalysis depends on serine 178, which acts as the Acyl-ester intermediate.

Belongs to the amidase family. GatA subfamily. In terms of assembly, heterotrimer of A, B and C subunits.

The enzyme catalyses L-glutamyl-tRNA(Gln) + L-glutamine + ATP + H2O = L-glutaminyl-tRNA(Gln) + L-glutamate + ADP + phosphate + H(+). Allows the formation of correctly charged Gln-tRNA(Gln) through the transamidation of misacylated Glu-tRNA(Gln) in organisms which lack glutaminyl-tRNA synthetase. The reaction takes place in the presence of glutamine and ATP through an activated gamma-phospho-Glu-tRNA(Gln). This chain is Glutamyl-tRNA(Gln) amidotransferase subunit A, found in Staphylococcus aureus.